Consider the following 551-residue polypeptide: Membrane protein insertase YidC (551 aa).

A helical transmembrane segment spans residues 3–23; that stretch reads ANHIRILLLVTIAIMFISLMG. A compositionally biased stretch (polar residues) spans 33 to 47; it reads NTKQQTSATQNNSHY. Residues 33–59 form a disordered region; sequence NTKQQTSATQNNSHYDNADSSTNTDVT. Residues 50 to 59 show a composition bias toward low complexity; sequence ADSSTNTDVT. A run of 3 helical transmembrane segments spans residues 361 to 381, 431 to 451, and 504 to 524; these read LVGNWGLAIILVTCLIKLIFY, LSGCLPMLIQIPIFISLYWVL, and VMMFLPVIFTFLFASFPSGLV.

The protein belongs to the OXA1/ALB3/YidC family. Type 1 subfamily. Interacts with the Sec translocase complex via SecD. Specifically interacts with transmembrane segments of nascent integral membrane proteins during membrane integration.

It localises to the cell inner membrane. Functionally, required for the insertion and/or proper folding and/or complex formation of integral membrane proteins into the membrane. Involved in integration of membrane proteins that insert both dependently and independently of the Sec translocase complex, as well as at least some lipoproteins. Aids folding of multispanning membrane proteins. The polypeptide is Membrane protein insertase YidC (Francisella tularensis subsp. mediasiatica (strain FSC147)).